Here is a 98-residue protein sequence, read N- to C-terminus: Integration host factor subunit beta (98 aa).

Belongs to the bacterial histone-like protein family. Heterodimer of an alpha and a beta chain.

Functionally, this protein is one of the two subunits of integration host factor, a specific DNA-binding protein that functions in genetic recombination as well as in transcriptional and translational control. This Pseudomonas syringae pv. tomato (strain ATCC BAA-871 / DC3000) protein is Integration host factor subunit beta.